We begin with the raw amino-acid sequence, 107 residues long: MSTAELACSYAALILADDGIEISADKIQTLISAANVQEVEPIWASIFARALEGKDIKELLTNVGSAGPASAAPAGAAGAAAPAEEKAEEKEEEKEESDEDMGFGLFD.

Low complexity predominate over residues 67–82 (GPASAAPAGAAGAAAP). The disordered stretch occupies residues 67 to 107 (GPASAAPAGAAGAAAPAEEKAEEKEEEKEESDEDMGFGLFD). Residues 90–101 (KEEEKEESDEDM) are compositionally biased toward acidic residues.

The protein belongs to the eukaryotic ribosomal protein P1/P2 family. As to quaternary structure, P1 and P2 exist as dimers at the large ribosomal subunit.

The protein localises to the cytoplasm. Plays an important role in the elongation step of protein synthesis. In Penicillium crustosum (Blue mold fungus), this protein is Large ribosomal subunit protein P1.